Here is a 118-residue protein sequence, read N- to C-terminus: Ribosome-binding factor A (118 aa).

It belongs to the RbfA family. As to quaternary structure, monomer. Binds 30S ribosomal subunits, but not 50S ribosomal subunits or 70S ribosomes.

It localises to the cytoplasm. In terms of biological role, one of several proteins that assist in the late maturation steps of the functional core of the 30S ribosomal subunit. Associates with free 30S ribosomal subunits (but not with 30S subunits that are part of 70S ribosomes or polysomes). Required for efficient processing of 16S rRNA. May interact with the 5'-terminal helix region of 16S rRNA. The sequence is that of Ribosome-binding factor A from Bacillus cereus (strain ATCC 10987 / NRS 248).